A 122-amino-acid chain; its full sequence is Large ribosomal subunit protein uL14 (122 aa).

It belongs to the universal ribosomal protein uL14 family. Part of the 50S ribosomal subunit. Forms a cluster with proteins L3 and L19. In the 70S ribosome, L14 and L19 interact and together make contacts with the 16S rRNA in bridges B5 and B8.

Binds to 23S rRNA. Forms part of two intersubunit bridges in the 70S ribosome. This is Large ribosomal subunit protein uL14 from Leuconostoc mesenteroides subsp. mesenteroides (strain ATCC 8293 / DSM 20343 / BCRC 11652 / CCM 1803 / JCM 6124 / NCDO 523 / NBRC 100496 / NCIMB 8023 / NCTC 12954 / NRRL B-1118 / 37Y).